A 1467-amino-acid polypeptide reads, in one-letter code: MSDESASGSDPDLDPDVELEDAEEEEEEEEVAVEECDRDDEEDLLDDPSLEGMCGTEHAQLGEDGQQPPRCTSTTSSQSEPSEQLRRHQGKNLASEDPKKKRAQKPSHMRRNIRKLLREDQLEPVTKAAQQEELERRKRLEQQRKDYAAPIPTVPLEFLPEEIALRASDGPQLPPRVLAQEVICLDSSSGSEDEKSSRDEVIELSSGEEDTLHIVDSSESVSEDDEEEEKGGTHVNDVLNQRDALGRVLVNLNHPPEEENVFLAPQLARAVKPHQIGGIRFLYDNLVESLERFKTSSGFGCILAHSMGLGKTLQVISFIDVLFRHTPAKTVLAIVPVNTLQNWLAEFNMWLPPPEALPADNKPEEVQPRFFKVHILNDEHKTMASRAKVMADWVSEGGVLLMGYEMYRLLTLKKSFATGRPKKTKKRSHPVIIDLDEEDRQQEFRREFEKALCRPGPDVVICDEGHRIKNCQASTSQALKNIRSRRRVVLTGYPLQNNLIEYWCMVDFVRPDFLGTRQEFSNMFERPILNGQCIDSTPQDVRLMRYRSHVLHSLLEGFVQRRGHTVLKIHLPAKEENVILVRLSKIQRDLYTQFMDRFRDCGSSGWLGLNPLKAFCVCCKIWNHPDVLYEALQKESLANEQDLDVEELGSAGTSARCPPQGTKGKGEDSTLASSMGEATNSKFLQGVGFNPFQERGNNIVTYEWAKDLLTNYQTGVLENSPKMVLLFHLIEESVKLGDKILVFSQSLSTLALIEEFLGKREVPCPPGTEGQGAQKWVRNISYFRLDGSTPAFERERLINQFNDPSNLTTWLFLLSTRAGCLGVNLIGANRVVVFDASWNPCHDAQAVCRVYRYGQKKPCYIYRLVADYTLEKKIYDRQISKQGMSDRVVDDLNPMLNFTRKEVENLLHFVEKEPAPQVSLNVKGIKESVLQLACLKYPHLITKEPFEHESLLLNRKDHKLTKAEKKAAKKSYEEDKRTSVPYTRPSYAQYYPASDQSLTSIPAFSQRNWQPTLKGDEKPVASVRPVQSTPIPMMPRHVPLGGSVSSASSTNPSMNFPINYLQRAGVLVQKVVTTTDIVIPGLNSSTDVQARINAGESIHIIRGTKGTYIRTSDGRIFAVRATGKPKVPEDGRMAASGSQGPSCESTSNGRHSASSPKAPDPEGLARPVSPDSPEIISELQQYADVAAARESRQSSPSTNAALPGPPAQLMDSSAVPGTALGTEPRLGGHCLNSSLLVTGQPCGDRHPVLDLRGHKRKLATPPAAQESSRRRSRKGHLPAPVQPYEHGYPVSGGFAMPPVSLNHNLTTPFTSQAGENSLFMGSTPSYYQLSNLLADARLVFPVTTDPLVPAGPVSSSSTATSVTASNPSFMLNPSVPGILPSYSLPFSQPLLSEPRMFAPFPSPVLPSNLSRGMSIYPGYMSPHAGYPAGGLLRSQVPPFDSHEVAEVGFSSNDDEDKDDDVIEVTGK.

Disordered stretches follow at residues 1–150 (MSDE…YAAP) and 186–234 (DSSS…GGTH). Positions 11–49 (PDLDPDVELEDAEEEEEEEEVAVEECDRDDEEDLLDDPS) are enriched in acidic residues. Residues 72–82 (TSTTSSQSEPS) show a composition bias toward low complexity. Positions 100 to 115 (KKRAQKPSHMRRNIRK) are enriched in basic residues. Glycyl lysine isopeptide (Lys-Gly) (interchain with G-Cter in SUMO2) cross-links involve residues lysine 115 and lysine 127. Basic and acidic residues-rich tracts occupy residues 133–147 (ELER…RKDY) and 192–201 (EDEKSSRDEV). Residue lysine 272 forms a Glycyl lysine isopeptide (Lys-Gly) (interchain with G-Cter in SUMO2) linkage. A Helicase ATP-binding domain is found at 292 to 512 (RFKTSSGFGC…WCMVDFVRPD (221 aa)). Residue 305–312 (HSMGLGKT) participates in ATP binding. A DEAH box motif is present at residues 463-466 (DEGH). The LXXLL motif 1 motif lies at 551–555 (LHSLL). The segment at 649-673 (GSAGTSARCPPQGTKGKGEDSTLAS) is disordered. Residues lysine 665, lysine 682, lysine 759, lysine 901, lysine 1014, and lysine 1018 each participate in a glycyl lysine isopeptide (Lys-Gly) (interchain with G-Cter in SUMO2) cross-link. Positions 728–896 (HLIEESVKLG…RVVDDLNPML (169 aa)) constitute a Helicase C-terminal domain. The tract at residues 1120 to 1171 (RATGKPKVPEDGRMAASGSQGPSCESTSNGRHSASSPKAPDPEGLARPVSPD) is disordered. Residues 1136 to 1155 (SGSQGPSCESTSNGRHSASS) are compositionally biased toward polar residues. Phosphoserine occurs at positions 1169 and 1172. Disordered regions lie at residues 1184–1221 (DVAA…TALG) and 1247–1284 (PVLD…VQPY). Threonine 1260 is modified (phosphothreonine). Residues 1329–1333 (LSNLL) carry the LXXLL motif 2 motif. The segment at 1445–1467 (AEVGFSSNDDEDKDDDVIEVTGK) is disordered. Residues 1452-1467 (NDDEDKDDDVIEVTGK) are compositionally biased toward acidic residues.

The protein belongs to the SNF2/RAD54 helicase family. In terms of assembly, interacts with AR via its N-terminus. Interacts with DYRK1A. Binds DNA and mononucleosomes, but does not seem to form large multiprotein complexes. In terms of processing, sumoylated.

The protein localises to the nucleus. It carries out the reaction ATP + H2O = ADP + phosphate + H(+). Enzyme activity is enhanced by dsDNA (double-stranded DNA) and ssDNA (single-stranded DNA). Its function is as follows. DNA helicase that modulates androgen receptor (AR)-dependent transactivation in a promoter-dependent manner. Not able to remodel mononucleosomes in vitro. This Homo sapiens (Human) protein is Helicase ARIP4 (RAD54L2).